The chain runs to 245 residues: 1-(5-phosphoribosyl)-5-[(5-phosphoribosylamino)methylideneamino] imidazole-4-carboxamide isomerase (245 aa).

The active-site Proton acceptor is the Asp11. Asp132 serves as the catalytic Proton donor.

Belongs to the HisA/HisF family.

The protein resides in the cytoplasm. It catalyses the reaction 1-(5-phospho-beta-D-ribosyl)-5-[(5-phospho-beta-D-ribosylamino)methylideneamino]imidazole-4-carboxamide = 5-[(5-phospho-1-deoxy-D-ribulos-1-ylimino)methylamino]-1-(5-phospho-beta-D-ribosyl)imidazole-4-carboxamide. The protein operates within amino-acid biosynthesis; L-histidine biosynthesis; L-histidine from 5-phospho-alpha-D-ribose 1-diphosphate: step 4/9. This Xanthobacter autotrophicus (strain ATCC BAA-1158 / Py2) protein is 1-(5-phosphoribosyl)-5-[(5-phosphoribosylamino)methylideneamino] imidazole-4-carboxamide isomerase.